Here is a 188-residue protein sequence, read N- to C-terminus: ATP synthase subunit b 2 (188 aa).

A disordered region spans residues 1-23; the sequence is MAEGHGDANGATAHTAADGGHKA. Low complexity predominate over residues 8-18; sequence ANGATAHTAAD. The helical transmembrane segment at 37–57 threads the bilayer; it reads LVSLLIAFVALYLIVSKIALP.

This sequence belongs to the ATPase B chain family. As to quaternary structure, F-type ATPases have 2 components, F(1) - the catalytic core - and F(0) - the membrane proton channel. F(1) has five subunits: alpha(3), beta(3), gamma(1), delta(1), epsilon(1). F(0) has three main subunits: a(1), b(2) and c(10-14). The alpha and beta chains form an alternating ring which encloses part of the gamma chain. F(1) is attached to F(0) by a central stalk formed by the gamma and epsilon chains, while a peripheral stalk is formed by the delta and b chains.

Its subcellular location is the cell inner membrane. Its function is as follows. F(1)F(0) ATP synthase produces ATP from ADP in the presence of a proton or sodium gradient. F-type ATPases consist of two structural domains, F(1) containing the extramembraneous catalytic core and F(0) containing the membrane proton channel, linked together by a central stalk and a peripheral stalk. During catalysis, ATP synthesis in the catalytic domain of F(1) is coupled via a rotary mechanism of the central stalk subunits to proton translocation. Component of the F(0) channel, it forms part of the peripheral stalk, linking F(1) to F(0). The b'-subunit is a diverged and duplicated form of b found in plants and photosynthetic bacteria. This Rhodopseudomonas palustris (strain BisB18) protein is ATP synthase subunit b 2 (atpF2).